We begin with the raw amino-acid sequence, 165 residues long: Phosphopantetheine adenylyltransferase (165 aa).

Position 9 (S9) interacts with substrate. ATP is bound by residues S9–F10 and H17. Residues K41, I75, and R89 each contribute to the substrate site. Residues G90–R92, E100, and Y125–D131 each bind ATP.

Belongs to the bacterial CoaD family. Homohexamer. Mg(2+) is required as a cofactor.

The protein resides in the cytoplasm. It catalyses the reaction (R)-4'-phosphopantetheine + ATP + H(+) = 3'-dephospho-CoA + diphosphate. The protein operates within cofactor biosynthesis; coenzyme A biosynthesis; CoA from (R)-pantothenate: step 4/5. Reversibly transfers an adenylyl group from ATP to 4'-phosphopantetheine, yielding dephospho-CoA (dPCoA) and pyrophosphate. This Borrelia turicatae (strain 91E135) protein is Phosphopantetheine adenylyltransferase.